Here is a 281-residue protein sequence, read N- to C-terminus: Undecaprenyl-diphosphatase (281 aa).

8 consecutive transmembrane segments (helical) span residues 5 to 25 (LFVL…FLPI), 48 to 68 (VKMY…LLYW), 92 to 112 (FWFM…LLDA), 118 to 138 (LMTP…MIYA), 154 to 174 (VTPK…IPGM), 192 to 212 (VVAA…YSLL), 226 to 246 (AELI…VAVI), and 261 to 281 (FAIY…MGFF).

It belongs to the UppP family.

It is found in the cell membrane. The enzyme catalyses di-trans,octa-cis-undecaprenyl diphosphate + H2O = di-trans,octa-cis-undecaprenyl phosphate + phosphate + H(+). Catalyzes the dephosphorylation of undecaprenyl diphosphate (UPP). Confers resistance to bacitracin. The polypeptide is Undecaprenyl-diphosphatase (Ruminiclostridium cellulolyticum (strain ATCC 35319 / DSM 5812 / JCM 6584 / H10) (Clostridium cellulolyticum)).